A 366-amino-acid polypeptide reads, in one-letter code: UDP-N-acetylenolpyruvoylglucosamine reductase (366 aa).

In terms of domain architecture, FAD-binding PCMH-type spans 29–203 (VGPVARTLVT…LEVEFALDAS (175 aa)). Residue Arg-177 is part of the active site. The active-site Proton donor is Ser-258. Glu-358 is a catalytic residue.

The protein belongs to the MurB family. It depends on FAD as a cofactor.

The protein resides in the cytoplasm. It catalyses the reaction UDP-N-acetyl-alpha-D-muramate + NADP(+) = UDP-N-acetyl-3-O-(1-carboxyvinyl)-alpha-D-glucosamine + NADPH + H(+). It participates in cell wall biogenesis; peptidoglycan biosynthesis. Functionally, cell wall formation. The polypeptide is UDP-N-acetylenolpyruvoylglucosamine reductase (Mycobacterium marinum (strain ATCC BAA-535 / M)).